The sequence spans 1052 residues: Protein argonaute 14 (1052 aa).

Residues 1 to 39 (MASRGGDGLVGGGRGPLGGRDGRGRGPAGGRGGGRGGGH) show a composition bias toward gly residues. Disordered stretches follow at residues 1 to 127 (MASR…TPAV) and 170 to 194 (GGRP…APPS). Low complexity predominate over residues 40-49 (PQQQQQQQPG). Gly residues-rich tracts occupy residues 50–59 (YGRGDGGGRG) and 66–81 (GVVG…GGRG). Low complexity predominate over residues 97–117 (VRPAMAAAPAASTPGPVAVAA). Pro residues predominate over residues 173-183 (PAPPAAPPAPI). Positions 394 to 510 (SVVEYVKNCL…LPMEVCTIVE (117 aa)) constitute a PAZ domain. A Piwi domain is found at 677–1009 (LLIVILPDVN…AAFRARYYDE (333 aa)).

This sequence belongs to the argonaute family. Ago subfamily. Expressed in seeds.

Functionally, probably involved in the RNA silencing pathway. May bind to short RNAs such as microRNAs (miRNAs) or short interfering RNAs (siRNAs), and represses the translation of mRNAs which are complementary to them. This is Protein argonaute 14 (AGO14) from Oryza sativa subsp. japonica (Rice).